A 92-amino-acid polypeptide reads, in one-letter code: MSSRRSRSRQSGSSRITDEQISDLVSKLQDLLPEARLRSNDRVPSSRVLQETCNYIRSLHQEVDDLSERLSELLATSDMSSAQAAIIRSLLM.

The segment at 1-20 (MSSRRSRSRQSGSSRITDEQ) is disordered. One can recognise a bHLH domain in the interval 5–59 (RSRSRQSGSSRITDEQISDLVSKLQDLLPEARLRSNDRVPSSRVLQETCNYIRSL).

Belongs to the bHLH protein family. As to quaternary structure, interacts with APG.

The protein localises to the nucleus. In terms of biological role, atypical and probable non DNA-binding bHLH transcription factor that acts as a positive regulator of grain size. Binds the transcription repressor APG and forms a heterodimer of antagonistic bHLH transcription factors that regulates grain length and weight by controlling cell elongation in lemma and palea. May be involved in the control of lamina inclination through brassinosteroid signaling pathway. In Oryza sativa subsp. indica (Rice), this protein is Transcription factor ILI6 (ILI6).